Reading from the N-terminus, the 1284-residue chain is Neurexin-4 (1284 aa).

An N-terminal signal peptide occupies residues 1–35 (MRPPRSNTKAAFSSLQFGLLCLLLLVNNGIKSVQA). The Extracellular portion of the chain corresponds to 36–1217 (DAFTDYFSDY…LRKAYNEVDS (1182 aa)). Residues 47–185 (CNQPLMERAV…ISMRVELYGC (139 aa)) form the F5/8 type C domain. A disulfide bridge connects residues cysteine 47 and cysteine 185. N-linked (GlcNAc...) asparagine glycans are attached at residues asparagine 195, asparagine 329, asparagine 340, and asparagine 398. The Laminin G-like 1 domain occupies 220–369 (FKTAFANGVM…FTRVNTIYAC (150 aa)). A disulfide bond links cysteine 333 and cysteine 369. Positions 403–540 (FRTYEETGVM…CGDDVVVDAC (138 aa)) constitute a Laminin G-like 2 domain. Cystine bridges form between cysteine 507–cysteine 540, cysteine 546–cysteine 557, cysteine 551–cysteine 566, and cysteine 568–cysteine 578. An EGF-like 1 domain is found at 542 to 579 (MIDRCNPNPCQHKGLCHQNSREFFCDCGHTGYAGAVCH). Asparagine 668 carries N-linked (GlcNAc...) asparagine glycosylation. The Laminin G-like 3 domain maps to 824–962 (FRTTQENSVI…RGLYGISTGC (139 aa)). 4 disulfide bridges follow: cysteine 934–cysteine 962, cysteine 966–cysteine 977, cysteine 971–cysteine 986, and cysteine 988–cysteine 998. One can recognise an EGF-like 2 domain in the interval 962 to 999 (CVGRCESNPCLNNGTCIERYDGYSCDCRWSAFKGPICA). An N-linked (GlcNAc...) asparagine glycan is attached at asparagine 974. In terms of domain architecture, Laminin G-like 4 spans 1032 to 1183 (FTTTIPKGFL…LGTQLTEDFC (152 aa)). Residues asparagine 1047 and asparagine 1137 are each glycosylated (N-linked (GlcNAc...) asparagine). Cysteines 1147 and 1183 form a disulfide. The helical transmembrane segment at 1218–1238 (VLLACLLVILFLLLILMFFLI) threads the bilayer. Over 1239-1284 (GRYLHRHKGDYLTHEDQGADGADDPDDAVLHSTTGHQVRKRTEIFI) the chain is Cytoplasmic.

It belongs to the neurexin family. Forms a complex with Nrg and Cont. Forms a complex composed of septa junction proteins Nrx-IV/Nrx, Tsf2/MTf, Cont and Nrg during late embryogenesis. The C-terminal region interacts with coracle. Interacts with Patj in cis form. Found in septate junctions of epithelial and glial cells.

It is found in the cell membrane. It localises to the cell junction. The protein localises to the septate junction. Seems to play a role in the formation and function of septate junctions. Septate junctions, which are the equivalent of vertebrates tight junctions, are characterized by regular arrays of transverse structures that span the intermembrane space and form a physical barrier to diffusion. Required for the blood-brain barrier formation. In Drosophila melanogaster (Fruit fly), this protein is Neurexin-4 (Nrx-IV).